We begin with the raw amino-acid sequence, 550 residues long: Arginine--tRNA ligase (550 aa).

Positions 130–140 (ANPTGPIHIGG) match the 'HIGH' region motif.

This sequence belongs to the class-I aminoacyl-tRNA synthetase family. In terms of assembly, monomer.

The protein resides in the cytoplasm. It carries out the reaction tRNA(Arg) + L-arginine + ATP = L-arginyl-tRNA(Arg) + AMP + diphosphate. The protein is Arginine--tRNA ligase (argS) of Mycolicibacterium smegmatis (strain ATCC 700084 / mc(2)155) (Mycobacterium smegmatis).